Reading from the N-terminus, the 365-residue chain is tRNA/tmRNA (uracil-C(5))-methyltransferase (365 aa).

Residues glutamine 189, tyrosine 217, asparagine 222, glutamate 238, and aspartate 298 each contribute to the S-adenosyl-L-methionine site. Cysteine 323 acts as the Nucleophile in catalysis. Residue glutamate 357 is the Proton acceptor of the active site.

This sequence belongs to the class I-like SAM-binding methyltransferase superfamily. RNA M5U methyltransferase family. TrmA subfamily.

The catalysed reaction is uridine(54) in tRNA + S-adenosyl-L-methionine = 5-methyluridine(54) in tRNA + S-adenosyl-L-homocysteine + H(+). It carries out the reaction uridine(341) in tmRNA + S-adenosyl-L-methionine = 5-methyluridine(341) in tmRNA + S-adenosyl-L-homocysteine + H(+). Its function is as follows. Dual-specificity methyltransferase that catalyzes the formation of 5-methyluridine at position 54 (m5U54) in all tRNAs, and that of position 341 (m5U341) in tmRNA (transfer-mRNA). This Proteus mirabilis (strain HI4320) protein is tRNA/tmRNA (uracil-C(5))-methyltransferase.